The following is a 344-amino-acid chain: Holliday junction branch migration complex subunit RuvB (344 aa).

The segment at 1–183 (MPDRELISGD…FGLVLRLDPY (183 aa)) is large ATPase domain (RuvB-L). ATP-binding positions include leucine 22, arginine 23, glycine 64, lysine 67, threonine 68, threonine 69, 130-132 (EDF), arginine 173, tyrosine 183, and arginine 220. Threonine 68 serves as a coordination point for Mg(2+). The small ATPAse domain (RuvB-S) stretch occupies residues 184 to 254 (NTEELKAIVK…VAQTALNLLD (71 aa)). Residues 257–344 (RYGLDEIDQK…EGDHPSLFEA (88 aa)) are head domain (RuvB-H). DNA contacts are provided by arginine 312 and arginine 317.

Belongs to the RuvB family. As to quaternary structure, homohexamer. Forms an RuvA(8)-RuvB(12)-Holliday junction (HJ) complex. HJ DNA is sandwiched between 2 RuvA tetramers; dsDNA enters through RuvA and exits via RuvB. An RuvB hexamer assembles on each DNA strand where it exits the tetramer. Each RuvB hexamer is contacted by two RuvA subunits (via domain III) on 2 adjacent RuvB subunits; this complex drives branch migration. In the full resolvosome a probable DNA-RuvA(4)-RuvB(12)-RuvC(2) complex forms which resolves the HJ.

The protein resides in the cytoplasm. The catalysed reaction is ATP + H2O = ADP + phosphate + H(+). In terms of biological role, the RuvA-RuvB-RuvC complex processes Holliday junction (HJ) DNA during genetic recombination and DNA repair, while the RuvA-RuvB complex plays an important role in the rescue of blocked DNA replication forks via replication fork reversal (RFR). RuvA specifically binds to HJ cruciform DNA, conferring on it an open structure. The RuvB hexamer acts as an ATP-dependent pump, pulling dsDNA into and through the RuvAB complex. RuvB forms 2 homohexamers on either side of HJ DNA bound by 1 or 2 RuvA tetramers; 4 subunits per hexamer contact DNA at a time. Coordinated motions by a converter formed by DNA-disengaged RuvB subunits stimulates ATP hydrolysis and nucleotide exchange. Immobilization of the converter enables RuvB to convert the ATP-contained energy into a lever motion, pulling 2 nucleotides of DNA out of the RuvA tetramer per ATP hydrolyzed, thus driving DNA branch migration. The RuvB motors rotate together with the DNA substrate, which together with the progressing nucleotide cycle form the mechanistic basis for DNA recombination by continuous HJ branch migration. Branch migration allows RuvC to scan DNA until it finds its consensus sequence, where it cleaves and resolves cruciform DNA. This Solibacter usitatus (strain Ellin6076) protein is Holliday junction branch migration complex subunit RuvB.